The sequence spans 148 residues: Hemoglobin subunit beta-A (148 aa).

The Globin domain maps to 3 to 148 (DWTDAERAAI…VVSALGRQYH (146 aa)). Heme b-binding residues include histidine 64 and histidine 93.

It belongs to the globin family. In terms of assembly, heterotetramer of two alpha chains and two beta chains. As to expression, red blood cells.

Functionally, involved in oxygen transport from gills to the various peripheral tissues. This chain is Hemoglobin subunit beta-A (hbb1), found in Seriola quinqueradiata (Five-ray yellowtail).